A 61-amino-acid polypeptide reads, in one-letter code: MADLKITLIKSIVHREPRQREIAKSLGLGRVHSSVVRPDNAATRGIIFKIAHLVSVEEVNK.

This sequence belongs to the universal ribosomal protein uL30 family. Part of the 50S ribosomal subunit.

This is Large ribosomal subunit protein uL30 from Oenococcus oeni (strain ATCC BAA-331 / PSU-1).